We begin with the raw amino-acid sequence, 378 residues long: Glutamate 5-kinase (378 aa).

Lys21 lines the ATP pocket. Substrate-binding residues include Ser61, Asp148, and Asn160. Position 180 to 181 (180 to 181 (TD)) interacts with ATP. Positions 286-364 (RGTLVLDAGA…RRIEELLGYM (79 aa)) constitute a PUA domain.

It belongs to the glutamate 5-kinase family.

The protein resides in the cytoplasm. It carries out the reaction L-glutamate + ATP = L-glutamyl 5-phosphate + ADP. Its pathway is amino-acid biosynthesis; L-proline biosynthesis; L-glutamate 5-semialdehyde from L-glutamate: step 1/2. In terms of biological role, catalyzes the transfer of a phosphate group to glutamate to form L-glutamate 5-phosphate. This Chromohalobacter salexigens (strain ATCC BAA-138 / DSM 3043 / CIP 106854 / NCIMB 13768 / 1H11) protein is Glutamate 5-kinase.